The primary structure comprises 266 residues: Phosphate import ATP-binding protein PstB 1 (266 aa).

An ABC transporter domain is found at 18–261 (AQTSNLSFYY…PTNQLTEQYV (244 aa)). 50 to 57 (GPSGCGKT) serves as a coordination point for ATP.

It belongs to the ABC transporter superfamily. Phosphate importer (TC 3.A.1.7) family. In terms of assembly, the complex is composed of two ATP-binding proteins (PstB), two transmembrane proteins (PstC and PstA) and a solute-binding protein (PstS).

It localises to the cell inner membrane. The enzyme catalyses phosphate(out) + ATP + H2O = ADP + 2 phosphate(in) + H(+). In terms of biological role, part of the ABC transporter complex PstSACB involved in phosphate import. Responsible for energy coupling to the transport system. This chain is Phosphate import ATP-binding protein PstB 1, found in Gloeobacter violaceus (strain ATCC 29082 / PCC 7421).